The sequence spans 101 residues: Large ribosomal subunit protein uL24 (101 aa).

This sequence belongs to the universal ribosomal protein uL24 family. Part of the 50S ribosomal subunit.

One of two assembly initiator proteins, it binds directly to the 5'-end of the 23S rRNA, where it nucleates assembly of the 50S subunit. In terms of biological role, one of the proteins that surrounds the polypeptide exit tunnel on the outside of the subunit. This is Large ribosomal subunit protein uL24 from Thermobifida fusca (strain YX).